Reading from the N-terminus, the 265-residue chain is Ribosomal RNA small subunit methyltransferase G (265 aa).

Residues G75, L80, and R145 each contribute to the S-adenosyl-L-methionine site. The tract at residues 212–265 (RAVRSSQRTRAESRGGRGDGERHDGRQVRRTSRDSLRSREVGRDQPTRGQSRST) is disordered. The span at 220–257 (TRAESRGGRGDGERHDGRQVRRTSRDSLRSREVGRDQP) shows a compositional bias: basic and acidic residues.

It belongs to the methyltransferase superfamily. RNA methyltransferase RsmG family.

It localises to the cytoplasm. Its function is as follows. Specifically methylates the N7 position of guanine in position 518 of 16S rRNA. This is Ribosomal RNA small subunit methyltransferase G from Frankia casuarinae (strain DSM 45818 / CECT 9043 / HFP020203 / CcI3).